The sequence spans 53 residues: Putative defensin-like protein 53 (53 aa).

4 cysteine pairs are disulfide-bonded: C12–C51, C16–C40, C26–C49, and C30–C50.

The protein belongs to the DEFL family.

This is Putative defensin-like protein 53 from Arabidopsis thaliana (Mouse-ear cress).